The sequence spans 255 residues: uncharacterized protein (255 aa).

This sequence belongs to the methyltransferase superfamily.

This is an uncharacterized protein from Mycolicibacterium paratuberculosis (strain ATCC BAA-968 / K-10) (Mycobacterium paratuberculosis).